Consider the following 345-residue polypeptide: Isocitrate lyase (345 aa).

Position 58–60 (58–60 (SGY)) interacts with substrate. D98 provides a ligand contact to Mg(2+). The active-site Proton acceptor is the C135. Residues 136-137 (GH), R170, 230-234 (NYSSS), and T260 each bind substrate. The segment at 318-345 (DPEARRRIEESEGFSEEQADPITSNDDD) is disordered. Residues 328 to 345 (SEGFSEEQADPITSNDDD) are compositionally biased toward acidic residues.

Homotetramer or homotrimer. Mg(2+) is required as a cofactor.

It carries out the reaction D-threo-isocitrate = glyoxylate + succinate. Its pathway is carbohydrate metabolism; glyoxylate cycle; (S)-malate from isocitrate: step 1/2. Functionally, involved in the metabolic adaptation in response to environmental changes. Catalyzes the reversible formation of succinate and glyoxylate from isocitrate, a key step of the glyoxylate cycle, which operates as an anaplerotic route for replenishing the tricarboxylic acid cycle during growth on fatty acid substrates. This Haloferax volcanii (strain ATCC 29605 / DSM 3757 / JCM 8879 / NBRC 14742 / NCIMB 2012 / VKM B-1768 / DS2) (Halobacterium volcanii) protein is Isocitrate lyase (aceA).